The primary structure comprises 385 residues: Probable tRNA sulfurtransferase (385 aa).

A THUMP domain is found at 57 to 160; sequence DGVIERVKKV…RGNAYVFTDK (104 aa). ATP is bound by residues 180-181, 205-206, Arg262, Gly284, and Gln293; these read ML and YY.

Belongs to the ThiI family.

The protein resides in the cytoplasm. The catalysed reaction is [ThiI sulfur-carrier protein]-S-sulfanyl-L-cysteine + a uridine in tRNA + 2 reduced [2Fe-2S]-[ferredoxin] + ATP + H(+) = [ThiI sulfur-carrier protein]-L-cysteine + a 4-thiouridine in tRNA + 2 oxidized [2Fe-2S]-[ferredoxin] + AMP + diphosphate. It catalyses the reaction [ThiS sulfur-carrier protein]-C-terminal Gly-Gly-AMP + S-sulfanyl-L-cysteinyl-[cysteine desulfurase] + AH2 = [ThiS sulfur-carrier protein]-C-terminal-Gly-aminoethanethioate + L-cysteinyl-[cysteine desulfurase] + A + AMP + 2 H(+). The protein operates within cofactor biosynthesis; thiamine diphosphate biosynthesis. Functionally, catalyzes the ATP-dependent transfer of a sulfur to tRNA to produce 4-thiouridine in position 8 of tRNAs, which functions as a near-UV photosensor. Also catalyzes the transfer of sulfur to the sulfur carrier protein ThiS, forming ThiS-thiocarboxylate. This is a step in the synthesis of thiazole, in the thiamine biosynthesis pathway. The sulfur is donated as persulfide by IscS. This chain is Probable tRNA sulfurtransferase, found in Clostridium perfringens (strain SM101 / Type A).